The chain runs to 860 residues: MQEQYRPEDIETQVQLHWQEKQTFKVTEDASKEKYYCLSMLPYPSGRLHMGHVRNYTIGDVISRYQRMLGKNVLQPIGWDAFGLPAEGAAVKNNTAPAPWTYDNIEYMKNQLKLLGFGYDWDREIATCKPDYYRWEQWFFTKLYEKGMVYKKTSAVNWCPHDLTVLANEQVIDGCCWRCDTKVERKEIPQWFIKITDYAEQLLNDLDTLESWPEQVKTMQRNWIGRSEGVDIVFDVVDSEEKLSVYTTRPDTFMGVTYVAVAAGHPLSLQAAATNPALADFVAECRNTKVAEAEMATMEKKGMATGLYAIHPLTGEKLPIWAANFVLMDYGTGAVMAVPGHDARDWEFATKYNLPIKPVILAADGSEPDLSQEAMTEKGTLFNSGEFDGLNHEDGFNAIADKLVALGVGQRKVNYRLRDWGVSRQRYWGAPIPMVTLEDGTVVPTPEDQLPVILPEDVVMDGISSPIKADPEWAKTTVNGIPGLRETDTFDTFMESSWYYARYTCPQYDDGMLDPAAANYWLPVDQYVGGIEHAIMHLMYFRFFHKLLRDAGLVDSDEPAKRLLCQGMVLADAFYYTGNNGERIWVSPVDAIVERDDKGRIVKAVDAEGHELVYAGMSKMSKSKNNGIDPQVMVEKYGADTVRLFMMFASPAEMTLEWQESGVEGANRFLKRVWRLAFDHTAKGAVKPLDIASLTEEQKSLRRDLHKTIAKVTDDVGRRQTFNTAIAAVMELMNKLGRAPQETEQDRALMQEALLAVVRMLYPFTPHVCFSLWQALGGEGDIDTAPWPIADEQAMVEDSKLVVVQVNGKVRGRITVPADATEQQVRERAGQEHLVAKYLDGVTVRKVIYVPGKLLNLVVG.

The short motif at 42-52 (PYPSGRLHMGH) is the 'HIGH' region element. The short motif at 619-623 (KMSKS) is the 'KMSKS' region element. Lys622 provides a ligand contact to ATP.

It belongs to the class-I aminoacyl-tRNA synthetase family.

Its subcellular location is the cytoplasm. It carries out the reaction tRNA(Leu) + L-leucine + ATP = L-leucyl-tRNA(Leu) + AMP + diphosphate. This Yersinia pseudotuberculosis serotype I (strain IP32953) protein is Leucine--tRNA ligase.